Consider the following 248-residue polypeptide: ATP synthase subunit a, chloroplastic (248 aa).

5 helical membrane-spanning segments follow: residues 35–55 (GQVF…SFLG), 94–114 (VPYI…GALI), 133–153 (INTT…AGLS), 202–222 (VFTL…GLFA), and 224–244 (SIQA…AMEG).

Belongs to the ATPase A chain family. F-type ATPases have 2 components, CF(1) - the catalytic core - and CF(0) - the membrane proton channel. CF(1) has five subunits: alpha(3), beta(3), gamma(1), delta(1), epsilon(1). CF(0) has four main subunits: a, b, b' and c.

The protein localises to the plastid. It localises to the chloroplast thylakoid membrane. Its function is as follows. Key component of the proton channel; it plays a direct role in the translocation of protons across the membrane. In Pyropia yezoensis (Susabi-nori), this protein is ATP synthase subunit a, chloroplastic.